Here is a 732-residue protein sequence, read N- to C-terminus: Zinc-exporting P-type ATPase (732 aa).

One can recognise an HMA domain in the interval 29 to 96 (GRMRVRADWV…AIGGAKHVAA (68 aa)). Transmembrane regions (helical) follow at residues 105 to 123 (HSTE…GGAA), 146 to 164 (MVAT…RGAL), 172 to 186 (AGTD…IASL), 195 to 209 (LTVL…YLQD), 342 to 366 (VGEN…LVTG), and 372 to 390 (MTML…TPTA). The active-site 4-aspartylphosphate intermediate is the aspartate 423. Positions 423, 425, and 625 each coordinate Mg(2+). 2 consecutive transmembrane segments (helical) span residues 676–695 (AVDV…AAGL) and 705–724 (PVLA…ANSS).

Belongs to the cation transport ATPase (P-type) (TC 3.A.3) family. Type IB subfamily.

It localises to the cell membrane. It catalyses the reaction Zn(2+)(in) + ATP + H2O = Zn(2+)(out) + ADP + phosphate + H(+). Functionally, zn(2+) efflux transporter which is involved in detoxification of zinc during infection. This Mycobacterium marinum (strain ATCC BAA-535 / M) protein is Zinc-exporting P-type ATPase.